The primary structure comprises 98 residues: NADH-ubiquinone oxidoreductase chain 4L (98 aa).

3 helical membrane passes run 1–21 (MSLV…GLLM), 29–49 (SLLC…LTIL), and 61–81 (IILL…LVMV).

It belongs to the complex I subunit 4L family. In terms of assembly, core subunit of respiratory chain NADH dehydrogenase (Complex I) which is composed of 45 different subunits.

The protein resides in the mitochondrion inner membrane. The catalysed reaction is a ubiquinone + NADH + 5 H(+)(in) = a ubiquinol + NAD(+) + 4 H(+)(out). Core subunit of the mitochondrial membrane respiratory chain NADH dehydrogenase (Complex I) which catalyzes electron transfer from NADH through the respiratory chain, using ubiquinone as an electron acceptor. Part of the enzyme membrane arm which is embedded in the lipid bilayer and involved in proton translocation. The chain is NADH-ubiquinone oxidoreductase chain 4L (MT-ND4L) from Muntiacus vuquangensis (Giant muntjac).